Reading from the N-terminus, the 745-residue chain is Class E vacuolar protein-sorting machinery protein hse1 (745 aa).

A VHS domain is found at 17-146 (ATDENLTSED…RLKQSNPTLQ (130 aa)). Residues 142–237 (NPTLQPPSAP…PQPVPSSTTA (96 aa)) form a disordered region. In terms of domain architecture, UIM spans 163–182 (KEEEELQMALQLSLQEEERK). The segment covering 186–214 (AGASGATASSSSGGAAAGPSNAGGAVASG) has biased composition (low complexity). In terms of domain architecture, SH3 spans 238 to 297 (ATVSRVRALYDFVPSEPGELEFKKGDVIAVLKSVYKDWWSGSLKGKTGIFPLNYVEKLAD). The interval 390–745 (SSMSHPPGPT…GLADYYRSAY (356 aa)) is disordered. Positions 425–446 (QQQEPPRFYNPAPAQDAPQYPA) are enriched in low complexity. 2 stretches are compositionally biased toward polar residues: residues 518-532 (LNTT…QYTP) and 540-576 (GANN…TNPL). The span at 577-590 (SNPSYNAPSAPSYS) shows a compositional bias: low complexity. Pro residues predominate over residues 618-635 (APPPPSGPAPSGPAPSAP). Over residues 636 to 647 (SAPSAPSAPGAP) the composition is skewed to low complexity. The span at 648 to 660 (NSYTQGAYHSQNP) shows a compositional bias: polar residues. Low complexity-rich tracts occupy residues 662 to 672 (AAAAAAAAAAA) and 719 to 733 (SAPG…APGQ).

The protein belongs to the STAM family. In terms of assembly, component of the ESCRT-0 complex composed of hse1 and vps27.

The protein resides in the endosome membrane. In terms of biological role, component of the ESCRT-0 complex which is the sorting receptor for ubiquitinated cargo proteins at the multivesicular body (MVB). The protein is Class E vacuolar protein-sorting machinery protein hse1 (hse1) of Neurospora crassa (strain ATCC 24698 / 74-OR23-1A / CBS 708.71 / DSM 1257 / FGSC 987).